The chain runs to 392 residues: Phospho-N-acetylmuramoyl-pentapeptide-transferase (392 aa).

10 helical membrane passes run Ile28–Ala48, Thr76–Leu96, Val101–Leu121, Met137–Leu157, Trp181–Thr201, Gly213–Ala233, Gly268–Phe288, Val295–Leu315, Val320–Val340, and Lys369–Leu389.

It belongs to the glycosyltransferase 4 family. MraY subfamily. Requires Mg(2+) as cofactor.

Its subcellular location is the cell inner membrane. It catalyses the reaction UDP-N-acetyl-alpha-D-muramoyl-L-alanyl-gamma-D-glutamyl-meso-2,6-diaminopimeloyl-D-alanyl-D-alanine + di-trans,octa-cis-undecaprenyl phosphate = di-trans,octa-cis-undecaprenyl diphospho-N-acetyl-alpha-D-muramoyl-L-alanyl-D-glutamyl-meso-2,6-diaminopimeloyl-D-alanyl-D-alanine + UMP. It participates in cell wall biogenesis; peptidoglycan biosynthesis. Functionally, catalyzes the initial step of the lipid cycle reactions in the biosynthesis of the cell wall peptidoglycan: transfers peptidoglycan precursor phospho-MurNAc-pentapeptide from UDP-MurNAc-pentapeptide onto the lipid carrier undecaprenyl phosphate, yielding undecaprenyl-pyrophosphoryl-MurNAc-pentapeptide, known as lipid I. In Myxococcus xanthus (strain DK1622), this protein is Phospho-N-acetylmuramoyl-pentapeptide-transferase.